The following is a 170-amino-acid chain: Shikimate kinase (170 aa).

Residue 11–16 (LSGKST) coordinates ATP. S15 is a Mg(2+) binding site. D33, R57, and G79 together coordinate substrate. Residue R119 participates in ATP binding. R137 is a binding site for substrate.

This sequence belongs to the shikimate kinase family. As to quaternary structure, monomer. Mg(2+) serves as cofactor.

Its subcellular location is the cytoplasm. It carries out the reaction shikimate + ATP = 3-phosphoshikimate + ADP + H(+). The protein operates within metabolic intermediate biosynthesis; chorismate biosynthesis; chorismate from D-erythrose 4-phosphate and phosphoenolpyruvate: step 5/7. In terms of biological role, catalyzes the specific phosphorylation of the 3-hydroxyl group of shikimic acid using ATP as a cosubstrate. The sequence is that of Shikimate kinase from Clostridium botulinum (strain Loch Maree / Type A3).